Reading from the N-terminus, the 1062-residue chain is Protein P1-P2 (1062 aa).

Positions 1-20 (MNRFTAYAALFFMFSLCSTA) are cleaved as a signal peptide. Transmembrane regions (helical) follow at residues 121–141 (AASV…WTLA), 144–164 (ITLF…LGCI), and 172–192 (ALSL…KIIW). The Peptidase S39 domain occupies 207–399 (VEGYKGFSVP…GITSPNYVFE (193 aa)). Active-site for protease activity residues include histidine 255, aspartate 286, and serine 354. The tract at residues 455–560 (ATNAPAEKTA…QTKEARKAWR (106 aa)) is disordered. Polar residues predominate over residues 463–484 (TAQTNSAEKTAPSTSAEKTALT). The span at 497-511 (QNKRQLRHPRRRYKR) shows a compositional bias: basic residues. Over residues 551-560 (QTKEARKAWR) the composition is skewed to basic and acidic residues. The 116-residue stretch at 859-974 (EYTRPTDCSG…APNSDLEEYK (116 aa)) folds into the RdRp catalytic domain.

In terms of processing, specific enzymatic cleavages in vivo yield mature proteins. The protease probably cleaves itself and releases the RdRp (Potential). Cleavages have been shown in the P1 protein, but since the N-terminus containing the serine protease is shared between P1 and P1-P2, cleavages should also occur within the P1-P2 protein.

The protein resides in the membrane. It catalyses the reaction RNA(n) + a ribonucleoside 5'-triphosphate = RNA(n+1) + diphosphate. Precursor from which the RNA-dependent RNA polymerase (RdRp) is probably released. RNA-dependent RNA polymerase plays an essential role in virus replication (Potential). The polypeptide is Protein P1-P2 (Potato leafroll virus (strain Potato/Scotland/strain 1/1984) (PLrV)).